Reading from the N-terminus, the 156-residue chain is Small ribosomal subunit protein uS7 (156 aa).

It belongs to the universal ribosomal protein uS7 family. In terms of assembly, part of the 30S ribosomal subunit. Contacts proteins S9 and S11.

Its function is as follows. One of the primary rRNA binding proteins, it binds directly to 16S rRNA where it nucleates assembly of the head domain of the 30S subunit. Is located at the subunit interface close to the decoding center, probably blocks exit of the E-site tRNA. This Trichlorobacter lovleyi (strain ATCC BAA-1151 / DSM 17278 / SZ) (Geobacter lovleyi) protein is Small ribosomal subunit protein uS7.